Here is a 142-residue protein sequence, read N- to C-terminus: Large ribosomal subunit protein uL13 (142 aa).

The protein belongs to the universal ribosomal protein uL13 family. As to quaternary structure, part of the 50S ribosomal subunit.

Functionally, this protein is one of the early assembly proteins of the 50S ribosomal subunit, although it is not seen to bind rRNA by itself. It is important during the early stages of 50S assembly. The sequence is that of Large ribosomal subunit protein uL13 from Azoarcus sp. (strain BH72).